The chain runs to 489 residues: UDP-N-acetylmuramate--L-alanine ligase (489 aa).

128-134 lines the ATP pocket; the sequence is GTHGKTT.

This sequence belongs to the MurCDEF family.

Its subcellular location is the cytoplasm. The enzyme catalyses UDP-N-acetyl-alpha-D-muramate + L-alanine + ATP = UDP-N-acetyl-alpha-D-muramoyl-L-alanine + ADP + phosphate + H(+). It functions in the pathway cell wall biogenesis; peptidoglycan biosynthesis. Cell wall formation. The polypeptide is UDP-N-acetylmuramate--L-alanine ligase (Shewanella pealeana (strain ATCC 700345 / ANG-SQ1)).